The chain runs to 107 residues: HTH-type transcriptional regulator Rv2034 (107 aa).

In terms of domain architecture, HTH arsR-type spans 1–93; it reads MSTYRSPDRA…DLDRFWTRAL (93 aa). Residues 33–56 constitute a DNA-binding region (H-T-H motif); it reads VGELARDLPVSRPAVSQHLKVLKT.

In terms of assembly, homodimer.

Its activity is regulated as follows. DNA-binding ability is not susceptible to zinc, nickel, cobalt, cadmium, lead, copper and manganese ions. In terms of biological role, involved in the regulation of lipid metabolism and hypoxic response. Positively regulates transcription of various genes, such as phoP, groEL2 and dosR. Negatively regulates its own transcription. Acts by binding to a specific palindromic sequence motif in promoter regions. This Mycobacterium tuberculosis (strain ATCC 25618 / H37Rv) protein is HTH-type transcriptional regulator Rv2034.